We begin with the raw amino-acid sequence, 287 residues long: MKVQYECLTCMANQCQRIVEMATQDMDIRRRAMILAAKLLAKEYNENAIPAIAGSLIFLELYKFLGNDDPFIEYKLKSEEMARKVADIIKRKLKLDFELAVKLAIIGNVIDFSVGFSPEDLEEEVEKMLKDKLYIDDSKELFEEVKRAENILYITDNVGEHYFDAILIEKIREISNAEVYIAGKEGPIINDATVEDLKRAGLEKLGKVISTGTRIVGVPLKLVSREFMEAFNKADVIIAKGQGNFETLSEINDSRIFFLLKAKCPAVARELKVPKGALVCMRNKFKL.

The Subfamily I CxxC motif signature appears at 7-10 (CLTC). Residues Asp-156, Asn-157, and Asp-191 each coordinate Mn(2+). A Subfamily I GNFE motif motif is present at residues 243-246 (GNFE). The Subfamily I KC motif motif lies at 263 to 264 (KC).

It belongs to the damage-control phosphatase family. Nucleotides phosphatase I subfamily. It depends on Mn(2+) as a cofactor. The cofactor is Ni(2+). Requires [2Fe-2S] cluster as cofactor.

Its activity is regulated as follows. Activity is strongly promoted by Co(2+), Ni(2+), Mg(2+), Mn(2+), Ca(2+), Zn(2+) and Cu(2+). Activity is inhibited by EDTA. Metal-dependent phosphatase with probable damage-control functions. Shows phosphatase activity against p-nitrophenyl phosphate (pNPP), but natural substrates have not been identified yet. Low phosphatase activity against 8-oxo nucleotides suggests that it could hydrolyze oxidatively damaged purine nucleotides or their biosynthetic intermediates. The sequence is that of Damage-control phosphatase PH1575 from Pyrococcus horikoshii (strain ATCC 700860 / DSM 12428 / JCM 9974 / NBRC 100139 / OT-3).